The sequence spans 214 residues: Pyridoxine/pyridoxamine 5'-phosphate oxidase (214 aa).

Substrate contacts are provided by residues Arg-9–Tyr-12 and Lys-67. Residues Arg-62–Lys-67, Tyr-77–Thr-78, Arg-83, Lys-84, and Gln-106 contribute to the FMN site. Substrate is bound by residues Tyr-124, Arg-128, and Ser-132. Residues Gln-141–Ser-142 and Trp-186 each bind FMN. Arg-192–His-194 contributes to the substrate binding site. Arg-196 lines the FMN pocket.

Belongs to the pyridoxamine 5'-phosphate oxidase family. As to quaternary structure, homodimer. FMN serves as cofactor.

The catalysed reaction is pyridoxamine 5'-phosphate + O2 + H2O = pyridoxal 5'-phosphate + H2O2 + NH4(+). It carries out the reaction pyridoxine 5'-phosphate + O2 = pyridoxal 5'-phosphate + H2O2. Its pathway is cofactor metabolism; pyridoxal 5'-phosphate salvage; pyridoxal 5'-phosphate from pyridoxamine 5'-phosphate: step 1/1. The protein operates within cofactor metabolism; pyridoxal 5'-phosphate salvage; pyridoxal 5'-phosphate from pyridoxine 5'-phosphate: step 1/1. Functionally, catalyzes the oxidation of either pyridoxine 5'-phosphate (PNP) or pyridoxamine 5'-phosphate (PMP) into pyridoxal 5'-phosphate (PLP). The protein is Pyridoxine/pyridoxamine 5'-phosphate oxidase of Leptospira interrogans serogroup Icterohaemorrhagiae serovar copenhageni (strain Fiocruz L1-130).